The chain runs to 864 residues: DNA mismatch repair protein MutS (864 aa).

607–614 contacts ATP; that stretch reads GPNMGGKS.

It belongs to the DNA mismatch repair MutS family.

This protein is involved in the repair of mismatches in DNA. It is possible that it carries out the mismatch recognition step. This protein has a weak ATPase activity. The polypeptide is DNA mismatch repair protein MutS (Neisseria meningitidis serogroup C / serotype 2a (strain ATCC 700532 / DSM 15464 / FAM18)).